A 486-amino-acid chain; its full sequence is Ribosomal protein uS12 methylthiotransferase RimO (486 aa).

The MTTase N-terminal domain maps to R9–H125. The [4Fe-4S] cluster site is built by C18, C54, C88, C191, C195, and C198. In terms of domain architecture, Radical SAM core spans L177–R408. The region spanning E410–V482 is the TRAM domain.

The protein belongs to the methylthiotransferase family. RimO subfamily. Requires [4Fe-4S] cluster as cofactor.

It localises to the cytoplasm. It carries out the reaction L-aspartate(89)-[ribosomal protein uS12]-hydrogen + (sulfur carrier)-SH + AH2 + 2 S-adenosyl-L-methionine = 3-methylsulfanyl-L-aspartate(89)-[ribosomal protein uS12]-hydrogen + (sulfur carrier)-H + 5'-deoxyadenosine + L-methionine + A + S-adenosyl-L-homocysteine + 2 H(+). Its function is as follows. Catalyzes the methylthiolation of an aspartic acid residue of ribosomal protein uS12. The chain is Ribosomal protein uS12 methylthiotransferase RimO from Kineococcus radiotolerans (strain ATCC BAA-149 / DSM 14245 / SRS30216).